We begin with the raw amino-acid sequence, 1415 residues long: Zygote defective protein 9 (1415 aa).

2 TOG regions span residues 1–250 (MSNW…AKNA) and 251–530 (PPVA…AGPA). Positions 21 to 48 (DELRESKKWQERKEALEALLKVLTDNER) form a coiled coil. HEAT repeat units follow at residues 30–68 (QERK…VLAK), 95–132 (SFAG…TMQS), 135–172 (TGQE…AKQP), and 179–217 (VVPV…VKNL). The tract at residues 243-278 (AEEQAKNAPPVAPTSSTPSASAASGDPSGGTATAVV) is disordered. The span at 255-276 (PTSSTPSASAASGDPSGGTATA) shows a compositional bias: low complexity. HEAT repeat units lie at residues 339 to 377 (ANYG…GLRT), 381 to 418 (PFAV…TTNL), 420 to 457 (AVGE…QTMP), and 464 to 502 (LIPS…SLQL). Residues 544 to 603 (APPAAAPPKKTAPPKKQPEDEEVVEEEDEPLKPPPGDKKKKVPVKENEENEPPVVAPKAE) form a disordered region. Positions 562–572 (EDEEVVEEEDE) are enriched in acidic residues. Positions 602–867 (AELLLSDNED…VEERIKRTGV (266 aa)) are TOG 3. HEAT repeat units lie at residues 706–743 (IKVL…LKTG), 764–801 (VGPL…NAGI), and 804–841 (LKSL…FEGD). Positions 867–914 (VKPGSGVVTSPPTGGPKILVPQQQGSVVRRPASRSRTREPEPEEVQSD) are disordered.

Belongs to the TOG/XMAP215 family. Interacts with tac-1 to form a heterodimer.

It localises to the cytoplasm. The protein localises to the cytoskeleton. The protein resides in the spindle pole. Its subcellular location is the microtubule organizing center. It is found in the centrosome. Its function is as follows. Plays a major role in organizing microtubules and spindle poles during mitosis and meiosis in one-cell stage embryos. Required for default nucleus positioning in oocytes. This is Zygote defective protein 9 from Caenorhabditis elegans.